We begin with the raw amino-acid sequence, 1125 residues long: Probable inorganic carbon transporter subunit DabA (1125 aa).

Cysteine 578, aspartate 580, histidine 769, and cysteine 784 together coordinate Zn(2+). The segment at 1106 to 1125 (SDPRPPALVEPKQTETHHAA) is disordered.

It belongs to the inorganic carbon transporter (TC 9.A.2) DabA family. Forms a complex with DabB. The cofactor is Zn(2+).

It localises to the cell inner membrane. Functionally, part of an energy-coupled inorganic carbon pump. The polypeptide is Probable inorganic carbon transporter subunit DabA (Nitrosococcus oceani (strain ATCC 19707 / BCRC 17464 / JCM 30415 / NCIMB 11848 / C-107)).